Reading from the N-terminus, the 292-residue chain is Glycine--tRNA ligase alpha subunit (292 aa).

This sequence belongs to the class-II aminoacyl-tRNA synthetase family. As to quaternary structure, tetramer of two alpha and two beta subunits.

The protein resides in the cytoplasm. It carries out the reaction tRNA(Gly) + glycine + ATP = glycyl-tRNA(Gly) + AMP + diphosphate. This chain is Glycine--tRNA ligase alpha subunit, found in Pelobacter propionicus (strain DSM 2379 / NBRC 103807 / OttBd1).